A 652-amino-acid polypeptide reads, in one-letter code: Acetyl-coenzyme A synthetase (652 aa).

Residues 191 to 194 and T311 contribute to the CoA site; that span reads RAGN. Residues 387 to 389, 411 to 416, D503, and R518 contribute to the ATP site; these read GEP and DTWWQT. S526 contributes to the CoA binding site. R529 serves as a coordination point for ATP. Residues V540, H542, and V545 each coordinate Mg(2+). R587 contributes to the CoA binding site. At K613 the chain carries N6-acetyllysine.

It belongs to the ATP-dependent AMP-binding enzyme family. Mg(2+) serves as cofactor. In terms of processing, acetylated. Deacetylation by the SIR2-homolog deacetylase activates the enzyme.

It carries out the reaction acetate + ATP + CoA = acetyl-CoA + AMP + diphosphate. Functionally, catalyzes the conversion of acetate into acetyl-CoA (AcCoA), an essential intermediate at the junction of anabolic and catabolic pathways. AcsA undergoes a two-step reaction. In the first half reaction, AcsA combines acetate with ATP to form acetyl-adenylate (AcAMP) intermediate. In the second half reaction, it can then transfer the acetyl group from AcAMP to the sulfhydryl group of CoA, forming the product AcCoA. This chain is Acetyl-coenzyme A synthetase, found in Marinomonas sp. (strain MWYL1).